Consider the following 357-residue polypeptide: Chorismate synthase (357 aa).

Position 47 (R47) interacts with NADP(+). Residues 123–125 (RAS), G281, 296–300 (KPTSS), and R324 contribute to the FMN site.

The protein belongs to the chorismate synthase family. In terms of assembly, homotetramer. Requires FMNH2 as cofactor.

It carries out the reaction 5-O-(1-carboxyvinyl)-3-phosphoshikimate = chorismate + phosphate. Its pathway is metabolic intermediate biosynthesis; chorismate biosynthesis; chorismate from D-erythrose 4-phosphate and phosphoenolpyruvate: step 7/7. Its function is as follows. Catalyzes the anti-1,4-elimination of the C-3 phosphate and the C-6 proR hydrogen from 5-enolpyruvylshikimate-3-phosphate (EPSP) to yield chorismate, which is the branch point compound that serves as the starting substrate for the three terminal pathways of aromatic amino acid biosynthesis. This reaction introduces a second double bond into the aromatic ring system. The protein is Chorismate synthase of Chlamydia trachomatis serovar L2 (strain ATCC VR-902B / DSM 19102 / 434/Bu).